The sequence spans 128 residues: Gastrotropin (128 aa).

Position 2 is an N-acetylalanine (alanine 2).

Belongs to the calycin superfamily. Fatty-acid binding protein (FABP) family. Found exclusively in the ileum and to a lesser extent in distal jejunum.

The protein resides in the cytoplasm. It localises to the membrane. In terms of biological role, binds to bile acids and is involved in enterohepatic bile acid metabolism. Required for efficient apical to basolateral transport of conjugated bile acids in ileal enterocytes. Stimulates gastric acid and pepsinogen secretion. The sequence is that of Gastrotropin (FABP6) from Sus scrofa (Pig).